The chain runs to 66 residues: DNA-directed RNA polymerase subunit Rpo10 (66 aa).

4 residues coordinate Zn(2+): Cys-7, Cys-10, Cys-47, and Cys-48.

Belongs to the archaeal Rpo10/eukaryotic RPB10 RNA polymerase subunit family. Part of the RNA polymerase complex. The cofactor is Zn(2+).

The protein localises to the cytoplasm. The enzyme catalyses RNA(n) + a ribonucleoside 5'-triphosphate = RNA(n+1) + diphosphate. DNA-dependent RNA polymerase (RNAP) catalyzes the transcription of DNA into RNA using the four ribonucleoside triphosphates as substrates. The polypeptide is DNA-directed RNA polymerase subunit Rpo10 (Halobacterium salinarum (strain ATCC 29341 / DSM 671 / R1)).